Here is an 853-residue protein sequence, read N- to C-terminus: Envelope glycoprotein gp160 (853 aa).

The signal sequence occupies residues 1 to 31; that stretch reads MRVKEIRKNWQHLRGGILLLGMLMICSAAKE. Residues 32-681 lie on the Extracellular side of the membrane; that stretch reads KTWVTIYYGV…ITNWLWYIRL (650 aa). Cys-53 and Cys-73 are disulfide-bonded. N-linked (GlcNAc...) asparagine; by host glycosylation is found at Asn-87, Asn-129, Asn-134, Asn-138, Asn-157, Asn-189, Asn-199, Asn-232, Asn-236, Asn-243, Asn-264, Asn-278, Asn-291, Asn-297, Asn-303, Asn-333, Asn-340, Asn-356, and Asn-362. Intrachain disulfides connect Cys-118–Cys-207, Cys-125–Cys-198, Cys-130–Cys-158, Cys-220–Cys-249, and Cys-230–Cys-241. The interval 130 to 157 is V1; the sequence is CTNLNITKNTTNPTSSSWGMMEKGEIKN. Residues 158 to 198 form a V2 region; the sequence is CSFYITTSIRNKVKKEYALFNRLDVVPIENTNNTKYRLISC. The V3 stretch occupies residues 298-331; it reads CTRPNNNTRRRLSIGPGRAFYARRNIIGDIRQAH. Cys-298 and Cys-332 are disulfide-bonded. Residues 364–374 form a CD4-binding loop region; it reads SSGGDPEIVMH. Disulfide bonds link Cys-378/Cys-441 and Cys-385/Cys-414. Residues 385 to 414 are V4; the sequence is CNTAQLFNSTWNVTGGTNGTEGNDIITLQC. N-linked (GlcNAc...) asparagine; by host glycosylation is found at Asn-392, Asn-396, Asn-402, Asn-444, and Asn-456. The tract at residues 459–468 is V5; it reads ETETEIFRPG. Residues 509–529 are fusion peptide; sequence AVGIGAVFLGFLGAAGSTMGA. An immunosuppression region spans residues 571 to 589; the sequence is KQLQARVLALERYLRDQQL. A disulfide bridge connects residues Cys-595 and Cys-601. Residues Asn-608, Asn-613, Asn-622, and Asn-634 are each glycosylated (N-linked (GlcNAc...) asparagine; by host). A coiled-coil region spans residues 630–664; the sequence is REIDNYTDYIYDLLEKSQTQQEKNEKELLELDKWA. The tract at residues 659 to 680 is MPER; binding to GalCer; sequence ELDKWASLWNWFDITNWLWYIR. Residues 682-702 traverse the membrane as a helical segment; the sequence is FIMIVGGLIGLRIVFAVLSIV. Residues 703-853 are Cytoplasmic-facing; that stretch reads NRVRQGYSPL…IRQGLERALL (151 aa). A YXXL motif; contains endocytosis signal motif is present at residues 709–712; it reads YSPL. Residues 718–740 are disordered; sequence LPASRGPDRPEGTEEEGGERDRD. S-palmitoyl cysteine; by host attachment occurs at residues Cys-761 and Cys-834. The Di-leucine internalization motif signature appears at 852–853; that stretch reads LL.

The protein belongs to the HIV-1 env protein family. As to quaternary structure, the mature envelope protein (Env) consists of a homotrimer of non-covalently associated gp120-gp41 heterodimers. The resulting complex protrudes from the virus surface as a spike. There seems to be as few as 10 spikes on the average virion. Interacts with host CD4, CCR5 and CXCR4. Gp120 also interacts with the C-type lectins CD209/DC-SIGN and CLEC4M/DC-SIGNR (collectively referred to as DC-SIGN(R)). Gp120 and gp41 interact with GalCer. Gp120 interacts with host ITGA4/ITGB7 complex; on CD4+ T-cells, this interaction results in rapid activation of integrin ITGAL/LFA-1, which facilitates efficient cell-to-cell spreading of HIV-1. Gp120 interacts with cell-associated heparan sulfate; this interaction increases virus infectivity on permissive cells and may be involved in infection of CD4- cells. In terms of assembly, the mature envelope protein (Env) consists of a homotrimer of non-covalently associated gp120-gp41 heterodimers. The resulting complex protrudes from the virus surface as a spike. There seems to be as few as 10 spikes on the average virion. Highly glycosylated by host. The high number of glycan on the protein is reffered to as 'glycan shield' because it contributes to hide protein sequence from adaptive immune system. Post-translationally, palmitoylation of the transmembrane protein and of Env polyprotein (prior to its proteolytic cleavage) is essential for their association with host cell membrane lipid rafts. Palmitoylation is therefore required for envelope trafficking to classical lipid rafts, but not for viral replication. In terms of processing, specific enzymatic cleavages in vivo yield mature proteins. Envelope glycoproteins are synthesized as an inactive precursor that is heavily N-glycosylated and processed likely by host cell furin in the Golgi to yield the mature SU and TM proteins. The cleavage site between SU and TM requires the minimal sequence [KR]-X-[KR]-R. About 2 of the 9 disulfide bonds of gp41 are reduced by P4HB/PDI, following binding to CD4 receptor.

The protein resides in the virion membrane. The protein localises to the host cell membrane. Its subcellular location is the host endosome membrane. Its function is as follows. Oligomerizes in the host endoplasmic reticulum into predominantly trimers. In a second time, gp160 transits in the host Golgi, where glycosylation is completed. The precursor is then proteolytically cleaved in the trans-Golgi and thereby activated by cellular furin or furin-like proteases to produce gp120 and gp41. Functionally, attaches the virus to the host lymphoid cell by binding to the primary receptor CD4. This interaction induces a structural rearrangement creating a high affinity binding site for a chemokine coreceptor like CXCR4 and/or CCR5. Acts as a ligand for CD209/DC-SIGN and CLEC4M/DC-SIGNR, which are respectively found on dendritic cells (DCs), and on endothelial cells of liver sinusoids and lymph node sinuses. These interactions allow capture of viral particles at mucosal surfaces by these cells and subsequent transmission to permissive cells. HIV subverts the migration properties of dendritic cells to gain access to CD4+ T-cells in lymph nodes. Virus transmission to permissive T-cells occurs either in trans (without DCs infection, through viral capture and transmission), or in cis (following DCs productive infection, through the usual CD4-gp120 interaction), thereby inducing a robust infection. In trans infection, bound virions remain infectious over days and it is proposed that they are not degraded, but protected in non-lysosomal acidic organelles within the DCs close to the cell membrane thus contributing to the viral infectious potential during DCs' migration from the periphery to the lymphoid tissues. On arrival at lymphoid tissues, intact virions recycle back to DCs' cell surface allowing virus transmission to CD4+ T-cells. In terms of biological role, acts as a class I viral fusion protein. Under the current model, the protein has at least 3 conformational states: pre-fusion native state, pre-hairpin intermediate state, and post-fusion hairpin state. During fusion of viral and target intracellular membranes, the coiled coil regions (heptad repeats) assume a trimer-of-hairpins structure, positioning the fusion peptide in close proximity to the C-terminal region of the ectodomain. The formation of this structure appears to drive apposition and subsequent fusion of viral and target cell membranes. Complete fusion occurs in host cell endosomes and is dynamin-dependent, however some lipid transfer might occur at the plasma membrane. The virus undergoes clathrin-dependent internalization long before endosomal fusion, thus minimizing the surface exposure of conserved viral epitopes during fusion and reducing the efficacy of inhibitors targeting these epitopes. Membranes fusion leads to delivery of the nucleocapsid into the cytoplasm. This Human immunodeficiency virus type 1 group M subtype B (strain 89.6) (HIV-1) protein is Envelope glycoprotein gp160.